The primary structure comprises 234 residues: Phosphoribosylaminoimidazole-succinocarboxamide synthase (234 aa).

The protein belongs to the SAICAR synthetase family.

The enzyme catalyses 5-amino-1-(5-phospho-D-ribosyl)imidazole-4-carboxylate + L-aspartate + ATP = (2S)-2-[5-amino-1-(5-phospho-beta-D-ribosyl)imidazole-4-carboxamido]succinate + ADP + phosphate + 2 H(+). It functions in the pathway purine metabolism; IMP biosynthesis via de novo pathway; 5-amino-1-(5-phospho-D-ribosyl)imidazole-4-carboxamide from 5-amino-1-(5-phospho-D-ribosyl)imidazole-4-carboxylate: step 1/2. In Streptococcus agalactiae serotype III (strain NEM316), this protein is Phosphoribosylaminoimidazole-succinocarboxamide synthase.